The following is a 386-amino-acid chain: MKTIILALALIALVSSTQSDVIDTIKKIDQSPFGRTLFDTIWLELQTGDPLDRLVSTLTDLEDRYVAEQKEDDAKNQEYQGACTVDITAFDKDLAESNRKKIELEARLEGQLYPQRSILEGLVAQKKAEVKGYQKDLDELDAQRAEEHEDFEEKVLEHQEATAIIAEARRLFADNIEHESFVQKGKAAKQPHKFTKDVANLIQKHFTTSAKKTAKFQHRKGYSKLFKAFATIASKVEQLADAGAVQKIIDLADELLAKISDSLSLLRFAEDKRVESYKKSRNFVVIALNVAGSALANAISDLAALNDIIAQVEASLDTTVQRIENVSADRHDRFTQCEEAVQDYSDARSARQSDRDVVSQTIGLVNKELRTLREQLALRQQAGEQI.

The signal sequence occupies residues 1-19 (MKTIILALALIALVSSTQS). Residues 20-48 (DVIDTIKKIDQSPFGRTLFDTIWLELQTG) constitute a propeptide that is removed on maturation. A coiled-coil region spans residues 51-154 (LDRLVSTLTD…AEEHEDFEEK (104 aa)). A propeptide spanning residues 184–238 (KGKAAKQPHKFTKDVANLIQKHFTTSAKKTAKFQHRKGYSKLFKAFATIASKVEQ) is cleaved from the precursor. The stretch at 294–325 (ALANAISDLAALNDIIAQVEASLDTTVQRIEN) forms a coiled coil.

Belongs to the TMP family.

The protein resides in the trichocyst. Its function is as follows. Structural protein that crystallize inside the trichocyst matrix. The sequence is that of Trichocyst matrix protein T2-B (T2B) from Paramecium tetraurelia.